The primary structure comprises 63 residues: Sarcotoxin-1A (63 aa).

An N-terminal signal peptide occupies residues 1–23 (MNFQNIFIFVALILAVFAGQSQA). An Arginine amide modification is found at Arg62.

Belongs to the cecropin family.

The protein resides in the secreted. Sarcotoxins, which are potent bactericidal proteins, are produced in response to injury. They are cytotoxic to both Gram-positive and Gram-negative bacteria. In Sarcophaga peregrina (Flesh fly), this protein is Sarcotoxin-1A.